Here is a 659-residue protein sequence, read N- to C-terminus: UvrABC system protein B (659 aa).

The Helicase ATP-binding domain occupies 27 to 414 (EGLEQNKKSQ…AHGEIVKQII (388 aa)). Position 40 to 47 (40 to 47 (GVTGSGKT)) interacts with ATP. The short motif at 93 to 116 (YFDYYRPEAYMPNTDTYIDKTTKS) is the Beta-hairpin element. In terms of domain architecture, Helicase C-terminal spans 432–594 (QVEDMFDEIQ…IIPKTIIKPI (163 aa)). The UVR domain maps to 624–659 (EALVKDLRNQMLDASKQLNFERAAELRDIILELEAN).

Belongs to the UvrB family. In terms of assembly, forms a heterotetramer with UvrA during the search for lesions. Interacts with UvrC in an incision complex.

The protein localises to the cytoplasm. Functionally, the UvrABC repair system catalyzes the recognition and processing of DNA lesions. A damage recognition complex composed of 2 UvrA and 2 UvrB subunits scans DNA for abnormalities. Upon binding of the UvrA(2)B(2) complex to a putative damaged site, the DNA wraps around one UvrB monomer. DNA wrap is dependent on ATP binding by UvrB and probably causes local melting of the DNA helix, facilitating insertion of UvrB beta-hairpin between the DNA strands. Then UvrB probes one DNA strand for the presence of a lesion. If a lesion is found the UvrA subunits dissociate and the UvrB-DNA preincision complex is formed. This complex is subsequently bound by UvrC and the second UvrB is released. If no lesion is found, the DNA wraps around the other UvrB subunit that will check the other stand for damage. This chain is UvrABC system protein B, found in Mycoplasma mobile (strain ATCC 43663 / 163K / NCTC 11711) (Mesomycoplasma mobile).